The following is a 1033-amino-acid chain: uncharacterized protein (1033 aa).

4 coiled-coil regions span residues 212 to 326 (EIFK…KMNN), 405 to 582 (ILNN…LYKF), 615 to 771 (LEKE…LKLN), and 797 to 1019 (KMKI…NIDN).

This is an uncharacterized protein from Plasmodium falciparum (isolate 3D7).